We begin with the raw amino-acid sequence, 824 residues long: MEDFSSFDKNKVSVDSMKRAILDRLYLSVVQSPESASPRDIFTAVAKTVMEWLAKGWLKTQNGYYKNDVKRVYYLSMEFLLGRSLKSNLLNLGILDLVRKALKTLNYDFDHLVEMESDAGLGNGGLGRLAACYLDSMATLAVPAYGYGIRYDYGIFDQRIVNGYQEEAPDEWLRYGNPWEICRGEYLYPVRFYGRVIHYTDSRGKQVADLVDTQEVLAMAYDIPIPGYGNDTVNSLRLWQAQSPRGFEFSYFNHGNYIQAIEDIALIENISRVLYPNDSITEGQELRLKQEYFLVSATIQDIIRRYTKTHICLDNLADKVVVQLNDTHPALGIAEMMHILVDREELPWDKAWEMTTVIFNYTNHTILPEALERWPLDLFSKLLPRHLEIIYEINSRWLEKVGSRYPKNDDKRRSLSIVEEGYQKRINMANLAVVGSAKVNGVSSFHSQLIKDTLFKEFYEFFPEKFINVTNGVTPRRWIALCNPRLSKLLNETIGDRYIIDLSHLSLIRSFAEDSGFRDHWKGVKLKNKQDLTSRIYNEVGEIVDPNSLFDCHIKRIHEYKRQLMNILRVIYVYNDLKENPNQDVVPTTVIFSGKAAPGYVMAKLIIKLINSVADVVNQDSRVNDKLKVLFLPNYRVSMAEHIIPGTDLSEQISTAGMEASGTGNMKFALNGALTIGTMDGANIEMAEHIGKENMFIFGLLEEQIVQLRREYCPQTICDKNPKIRQVLDLLEQGFFNSNDKDLFKPIVHRLLHEGDPFFVLADLESYIAAHENVNKLFKEPDSWTKISIYNTAGMGFFSSDRAIQDYARDIWHVPTKSCSGEGN.

Lysine 667 carries the post-translational modification N6-(pyridoxal phosphate)lysine.

The protein belongs to the glycogen phosphorylase family. It depends on pyridoxal 5'-phosphate as a cofactor.

The enzyme catalyses [(1-&gt;4)-alpha-D-glucosyl](n) + phosphate = [(1-&gt;4)-alpha-D-glucosyl](n-1) + alpha-D-glucose 1-phosphate. Its function is as follows. Phosphorylase is an important allosteric enzyme in carbohydrate metabolism. Enzymes from different sources differ in their regulatory mechanisms and in their natural substrates. However, all known phosphorylases share catalytic and structural properties. This Chlamydia pneumoniae (Chlamydophila pneumoniae) protein is Glycogen phosphorylase (glgP).